An 89-amino-acid polypeptide reads, in one-letter code: Small ribosomal subunit protein uS15 (89 aa).

Belongs to the universal ribosomal protein uS15 family. As to quaternary structure, part of the 30S ribosomal subunit. Forms a bridge to the 50S subunit in the 70S ribosome, contacting the 23S rRNA.

Its function is as follows. One of the primary rRNA binding proteins, it binds directly to 16S rRNA where it helps nucleate assembly of the platform of the 30S subunit by binding and bridging several RNA helices of the 16S rRNA. Forms an intersubunit bridge (bridge B4) with the 23S rRNA of the 50S subunit in the ribosome. This Burkholderia mallei (strain NCTC 10247) protein is Small ribosomal subunit protein uS15.